The primary structure comprises 2075 residues: Autophagy-related protein 2 homolog B (2075 aa).

A Chorein N-terminal domain is found at 13-107 (ACRYLLQRYL…LEMVFRPRPR (95 aa)). Phosphoserine occurs at positions 255, 379, 496, 839, 885, 898, and 1007. The residue at position 1011 (Tyr1011) is a Phosphotyrosine. Residues Ser1015 and Ser1017 each carry the phosphoserine modification. Residue Thr1021 is modified to Phosphothreonine. A disordered region spans residues 1373 to 1403 (KAEMKPGVPQRKPKVDSSARSSSHGPVLPEA). Ser1525 is modified (phosphoserine). 3 disordered regions span residues 1570-1593 (TSPA…GRHT), 1759-1792 (EPNL…EDVS), and 2055-2075 (RNQI…HGED). The segment covering 1578-1587 (PHSSPSQTPT) has biased composition (polar residues). Positions 2058–2075 (IRPDVRQDESQKWRHGED) are enriched in basic and acidic residues.

Belongs to the ATG2 family. Interacts with WDR45/WIPI4.

The protein localises to the preautophagosomal structure membrane. Its subcellular location is the lipid droplet. The protein resides in the endoplasmic reticulum membrane. It carries out the reaction a 1,2-diacyl-sn-glycero-3-phospho-L-serine(in) = a 1,2-diacyl-sn-glycero-3-phospho-L-serine(out). It catalyses the reaction a 1,2-diacyl-sn-glycero-3-phosphoethanolamine(in) = a 1,2-diacyl-sn-glycero-3-phosphoethanolamine(out). Functionally, lipid transfer protein required for both autophagosome formation and regulation of lipid droplet morphology and dispersion. Tethers the edge of the isolation membrane (IM) to the endoplasmic reticulum (ER) and mediates direct lipid transfer from ER to IM for IM expansion. Binds to the ER exit site (ERES), which is the membrane source for autophagosome formation, and extracts phospholipids from the membrane source and transfers them to ATG9 (ATG9A or ATG9B) to the IM for membrane expansion. Lipid transfer activity is enhanced by WDR45/WIPI4, which promotes ATG2B-association with phosphatidylinositol 3-monophosphate (PI3P)-containing membranes. This is Autophagy-related protein 2 homolog B from Mus musculus (Mouse).